The primary structure comprises 211 residues: Large ribosomal subunit protein bL25 (211 aa).

It belongs to the bacterial ribosomal protein bL25 family. CTC subfamily. Part of the 50S ribosomal subunit; part of the 5S rRNA/L5/L18/L25 subcomplex. Contacts the 5S rRNA. Binds to the 5S rRNA independently of L5 and L18.

In terms of biological role, this is one of the proteins that binds to the 5S RNA in the ribosome where it forms part of the central protuberance. The chain is Large ribosomal subunit protein bL25 from Anaplasma phagocytophilum (strain HZ).